Reading from the N-terminus, the 473-residue chain is Adenosylhomocysteinase (473 aa).

Residues 58 to 62 (HMTIQ), aspartate 135, and glutamate 197 contribute to the substrate site. 198–200 (TTT) contributes to the NAD(+) binding site. The substrate site is built by lysine 227 and aspartate 231. Residues asparagine 232, valine 265, glutamate 284, asparagine 319, 340-342 (IGH), and asparagine 385 each bind NAD(+). Histidine 342 is a substrate binding site. Substrate is bound at residue histidine 392. The NAD(+) site is built by lysine 467 and tyrosine 471.

This sequence belongs to the adenosylhomocysteinase family. Homotetramer; dimer of dimers. Requires NAD(+) as cofactor.

It localises to the cytoplasm. The enzyme catalyses S-adenosyl-L-homocysteine + H2O = L-homocysteine + adenosine. The protein operates within amino-acid biosynthesis; L-homocysteine biosynthesis; L-homocysteine from S-adenosyl-L-homocysteine: step 1/1. In terms of biological role, may play a key role in the regulation of the intracellular concentration of adenosylhomocysteine, which is a strong inhibitor of SAM-dependent methyltransferases. Catalyzes the hydrolysis of S-adenosyl-L-homocysteine into L-homocysteine and adenosine. The sequence is that of Adenosylhomocysteinase from Bradyrhizobium elkanii.